A 5571-amino-acid chain; its full sequence is Polyketide synthase GfsB (5571 aa).

The segment at 1–27 (MSVPPPGATPSRTSRTKGLKDRPRMEN) is disordered. Basic and acidic residues predominate over residues 18–27 (GLKDRPRMEN). The 427-residue stretch at 57 to 483 (QEPVAIIGMS…GTNAHVIIEQ (427 aa)) folds into the Ketosynthase family 3 (KS3) 1 domain. Module stretches follow at residues 57–2148 (QEPV…RDTL), 2167–3728 (DEPL…GSQV), and 3746–5485 (DEPV…HTHL). Residues cysteine 230, histidine 365, and histidine 405 each act as for beta-ketoacyl synthase 1 activity in the active site. The segment at 485 to 518 (PAIEGTGLGDDAPPTAEHPEERTPADGGPAPQPV) is disordered. The Malonyl-CoA:ACP transacylase (MAT) 1 domain occupies 611–926 (FVFPGQGSQW…LRSLAEAYAH (316 aa)). The tract at residues 976-1109 (HPLLAAATSL…GYLAVGAHEP (134 aa)) is N-terminal hotdog fold 1. One can recognise a PKS/mFAS DH 1 domain in the interval 976 to 1264 (HPLLAAATSL…LRPLATNQAP (289 aa)). Residue histidine 1008 is the Proton acceptor; for dehydratase activity 1 of the active site. The segment at 1122–1264 (ATPLDVTDLY…LRPLATNQAP (143 aa)) is C-terminal hotdog fold 1. The active-site Proton donor; for dehydratase activity 1 is the aspartate 1183. Positions 1478–1777 (GTLDHLTLIP…QARHIGKIVL (300 aa)) constitute an Enoyl reductase (ER) domain. Positions 1787-1966 (GTVLVTGATG…TSLAWGLWEE (180 aa)) constitute a Ketoreductase (KR) 1 domain. In terms of domain architecture, Carrier 1 spans 2073–2148 (RIVNDLVRDH…ELAAHLRDTL (76 aa)). Serine 2108 carries the O-(pantetheine 4'-phosphoryl)serine modification. One can recognise a Ketosynthase family 3 (KS3) 2 domain in the interval 2167–2593 (DEPLAVVAMS…GTNAHVILEQ (427 aa)). Residues cysteine 2340, histidine 2475, and histidine 2515 each act as for beta-ketoacyl synthase 2 activity in the active site. In terms of domain architecture, Malonyl-CoA:ACP transacylase (MAT) 2 spans 2710–3016 (VFSGQGSQRP…AAVALQRGNR (307 aa)). In terms of domain architecture, Ketoreductase (KR) 2 spans 3373 to 3551 (GTVLVTGGTG…VSVAWGPWAE (179 aa)). Residues 3653-3728 (TALLDLVRGQ…ALAEYVGSQV (76 aa)) enclose the Carrier 2 domain. The residue at position 3688 (serine 3688) is an O-(pantetheine 4'-phosphoryl)serine. The Ketosynthase family 3 (KS3) 3 domain maps to 3746-4172 (DEPVAIIGMS…GTNAHVILEQ (427 aa)). Active-site for beta-ketoacyl synthase 3 activity residues include cysteine 3919, histidine 4054, and histidine 4094. A Malonyl-CoA:ACP transacylase (MAT) 3 domain is found at 4279-4601 (FLFSGQGSQR…ATAHVNGVQP (323 aa)). The tract at residues 4649–4774 (HPLLAGVVDL…GALTVAEAVD (126 aa)) is N-terminal hotdog fold 2. Residues 4649 to 4931 (HPLLAGVVDL…TRPIAAGQLA (283 aa)) enclose the PKS/mFAS DH 2 domain. The active-site Proton acceptor; for dehydratase activity 2 is the histidine 4681. Positions 4787-4931 (AIEVELDDPY…TRPIAAGQLA (145 aa)) are C-terminal hotdog fold 2. Aspartate 4848 acts as the Proton donor; for dehydratase activity 2 in catalysis. Residues 5134 to 5306 (LLVTGASGVL…TSLSWGLWAE (173 aa)) enclose the Ketoreductase (KR) 3 domain. In terms of domain architecture, Carrier 3 spans 5410–5485 (RMVLDLVRDR…ALARYLHTHL (76 aa)). Position 5445 is an O-(pantetheine 4'-phosphoryl)serine (serine 5445).

It depends on pantetheine 4'-phosphate as a cofactor.

It participates in antibiotic biosynthesis. Second protein in the synthesis of the 16-membered macrolide antibiotics FD-891 and FD-892. Composed of 3 modules. Modifies the product of GfsA by multiple rounds of addition of malonyl-CoA or methylmalonyl-CoA and other modifications to help generate the final products. The chain is Polyketide synthase GfsB from Streptomyces halstedii.